Here is a 110-residue protein sequence, read N- to C-terminus: Small ribosomal subunit protein eS24 (110 aa).

The tract at residues 91-110 (RNKVEEQAEEAEEAEAGAAE) is disordered. Positions 97–110 (QAEEAEEAEAGAAE) are enriched in acidic residues.

The protein belongs to the eukaryotic ribosomal protein eS24 family.

This chain is Small ribosomal subunit protein eS24, found in Archaeoglobus fulgidus (strain ATCC 49558 / DSM 4304 / JCM 9628 / NBRC 100126 / VC-16).